A 295-amino-acid polypeptide reads, in one-letter code: Trimeric intracellular cation channel type A (295 aa).

Residues 1–18 are Lumenal-facing; it reads MEVLDVLNLGEIAQYFSK. A helical membrane pass occupies residues 19–37; it reads MAMFPVFDVAYYIVSILYL. At 38–51 the chain is on the cytoplasmic side; it reads KYEPGAVEVSRRSP. Residues 52 to 75 traverse the membrane as a helical segment; that stretch reads VASWLCAMLYCFGSYILADIMLGV. Glycine 74 contacts Ca(2+). Topologically, residues 76-86 are lumenal; it reads CPIDYFHNNSH. Residues 87–106 form a helical membrane-spanning segment; sequence ILLASAVWYLIFFCPLNLFY. The Cytoplasmic portion of the chain corresponds to 107 to 144; sequence KCVAFMPVKLVLVALKEVVRTRKIAAGVHHAHHAYHHG. Positions 122 and 126 each coordinate a 1,2-diacyl-sn-glycero-3-phospho-(1D-myo-inositol-4,5-bisphosphate). Residues 145–162 traverse the membrane as a helical segment; sequence WLIMVITGYVKGSGVALM. Topologically, residues 163-182 are lumenal; that stretch reads SNFEQLLRGVWKPETNEVLN. Residues 183–199 traverse the membrane as a helical segment; the sequence is MSFPTKASLYGAILFTL. The Cytoplasmic portion of the chain corresponds to 200–210; the sequence is QEAHVLPVSKS. The chain crosses the membrane as a helical span at residues 211-227; the sequence is TLICLFTLFMVSSKVFM. Topologically, residues 228 to 236 are lumenal; sequence TARHSHGSP. Residues 237–255 traverse the membrane as a helical segment; sequence FALIESWVCHVLFGSPLGT. Over 256–295 the chain is Cytoplasmic; sequence EDAHDHHHAAPAAAPAPLSPAKNKEELSEGTRKRKSKKAE. The interval 259-295 is disordered; sequence HDHHHAAPAAAPAPLSPAKNKEELSEGTRKRKSKKAE. Positions 265 to 276 are enriched in low complexity; the sequence is APAAAPAPLSPA. Positions 277–286 are enriched in basic and acidic residues; that stretch reads KNKEELSEGT.

Belongs to the TMEM38 family. In terms of assembly, homotrimer; conformation seems to be controled by binding to diacylglycerol (DAG).

Its subcellular location is the sarcoplasmic reticulum membrane. The protein resides in the nucleus membrane. The enzyme catalyses K(+)(in) = K(+)(out). Its activity is regulated as follows. Channel activity is activated by a change of voltage within the sarcoplasmic reticulum lumen and blocked by luminal high Ca(2+) levels. Functionally, intracellular monovalent cation channel required for maintenance of rapid intracellular calcium release. Acts as a potassium counter-ion channel that functions in synchronization with calcium release from intracellular stores. Opened by a change of voltage within the sarcoplasmic reticulum lumen. The protein is Trimeric intracellular cation channel type A (tmem38a) of Danio rerio (Zebrafish).